The chain runs to 364 residues: Geissoschizine synthase (364 aa).

Residues 24–343 (GILHPIKFSR…DYLSTAMERI (320 aa)) enclose the Enoyl reductase (ER) domain. Cys51 contacts Zn(2+). Asn52 contributes to the NADP(+) binding site. The Zn(2+) site is built by His73, Glu74, Cys104, Cys107, Cys110, Cys118, and Cys168. Residues Leu194, Gly196, Leu197, Ser216, Thr217, Ser218, Lys221, Arg261, Val280, Ala282, Ser304, Thr306, and Arg351 each contribute to the NADP(+) site.

It belongs to the zinc-containing alcohol dehydrogenase family. Class-III subfamily. As to quaternary structure, homodimer. It depends on Zn(2+) as a cofactor.

The enzyme catalyses (19E)-geissoschizine + NADP(+) = 4,21-dehydrogeissoschizine + NADPH. It carries out the reaction (19E)-geissoschizine + NADPH + H(+) = (16R,19E)-isositsirikine + NADP(+). It catalyses the reaction (19E)-geissoschizine + NADPH + H(+) = (16R,19Z)-isositsirikine + NADP(+). The protein operates within alkaloid biosynthesis. An alcohol dehydrogenase involved in the biosynthesis of seco-iridoid and derivatives monoterpenoid indole alkaloids natural products. Catalyzes the production of geissoschizine and its conversion to (16R)-E-isositsirikine and (16R)-Z-isositsirikine. This Alstonia scholaris (Dogbane) protein is Geissoschizine synthase.